The sequence spans 344 residues: Holliday junction branch migration complex subunit RuvB (344 aa).

The tract at residues 1-183 is large ATPase domain (RuvB-L); sequence MPDRELISGD…FGLVLRLDPY (183 aa). ATP-binding positions include Leu-22, Arg-23, Gly-64, Lys-67, Thr-68, Thr-69, 130–132, Arg-173, Tyr-183, and Arg-220; that span reads EDF. Thr-68 is a Mg(2+) binding site. Positions 184–254 are small ATPAse domain (RuvB-S); the sequence is NTEELKAIVK…VAQTALNLLD (71 aa). The tract at residues 257-344 is head domain (RuvB-H); sequence RYGLDEIDQK…EGDHPSLFEA (88 aa). Residues Arg-312 and Arg-317 each contribute to the DNA site.

The protein belongs to the RuvB family. Homohexamer. Forms an RuvA(8)-RuvB(12)-Holliday junction (HJ) complex. HJ DNA is sandwiched between 2 RuvA tetramers; dsDNA enters through RuvA and exits via RuvB. An RuvB hexamer assembles on each DNA strand where it exits the tetramer. Each RuvB hexamer is contacted by two RuvA subunits (via domain III) on 2 adjacent RuvB subunits; this complex drives branch migration. In the full resolvosome a probable DNA-RuvA(4)-RuvB(12)-RuvC(2) complex forms which resolves the HJ.

The protein resides in the cytoplasm. The catalysed reaction is ATP + H2O = ADP + phosphate + H(+). The RuvA-RuvB-RuvC complex processes Holliday junction (HJ) DNA during genetic recombination and DNA repair, while the RuvA-RuvB complex plays an important role in the rescue of blocked DNA replication forks via replication fork reversal (RFR). RuvA specifically binds to HJ cruciform DNA, conferring on it an open structure. The RuvB hexamer acts as an ATP-dependent pump, pulling dsDNA into and through the RuvAB complex. RuvB forms 2 homohexamers on either side of HJ DNA bound by 1 or 2 RuvA tetramers; 4 subunits per hexamer contact DNA at a time. Coordinated motions by a converter formed by DNA-disengaged RuvB subunits stimulates ATP hydrolysis and nucleotide exchange. Immobilization of the converter enables RuvB to convert the ATP-contained energy into a lever motion, pulling 2 nucleotides of DNA out of the RuvA tetramer per ATP hydrolyzed, thus driving DNA branch migration. The RuvB motors rotate together with the DNA substrate, which together with the progressing nucleotide cycle form the mechanistic basis for DNA recombination by continuous HJ branch migration. Branch migration allows RuvC to scan DNA until it finds its consensus sequence, where it cleaves and resolves cruciform DNA. This is Holliday junction branch migration complex subunit RuvB from Solibacter usitatus (strain Ellin6076).